Reading from the N-terminus, the 547-residue chain is Chaperonin GroEL (547 aa).

ATP contacts are provided by residues 30–33 (TLGP), Lys-51, 87–91 (DGTTT), Gly-415, and Asp-495.

Belongs to the chaperonin (HSP60) family. Forms a cylinder of 14 subunits composed of two heptameric rings stacked back-to-back. Interacts with the co-chaperonin GroES.

The protein localises to the cytoplasm. The enzyme catalyses ATP + H2O + a folded polypeptide = ADP + phosphate + an unfolded polypeptide.. Functionally, together with its co-chaperonin GroES, plays an essential role in assisting protein folding. The GroEL-GroES system forms a nano-cage that allows encapsulation of the non-native substrate proteins and provides a physical environment optimized to promote and accelerate protein folding. The chain is Chaperonin GroEL from Bartonella quintana (strain Toulouse) (Rochalimaea quintana).